The primary structure comprises 204 residues: MEPKAPCPAAVPSEERKFRVLVGVTGSVAALKLPLLVSKLLDVPGLEVTVVTTERAKHFYSPQDVPVTLYSDADEWEMWKRRSDPVLHIDLRRWADLMLVAPLDANTLGKVASGICDNLLTCVIRAWDLNKPLLFCPAMNTAMWEHPLTAQQVAQLKAFGYVEIPCVSKKLVCGDQGLGAMAEVETIVAKVQAVLSQHGSIQQS.

FMN contacts are provided by residues Thr53 and 104 to 107 (DANT). Asn140 contacts substrate. Cys173 functions as the Proton donor in the catalytic mechanism.

It belongs to the HFCD (homooligomeric flavin containing Cys decarboxylase) superfamily. Homotrimer. FMN serves as cofactor.

The enzyme catalyses N-[(R)-4-phosphopantothenoyl]-L-cysteine + H(+) = (R)-4'-phosphopantetheine + CO2. It participates in cofactor biosynthesis; coenzyme A biosynthesis; CoA from (R)-pantothenate: step 3/5. In terms of biological role, catalyzes the decarboxylation of the cysteine moiety of 4-phosphopantothenoylcysteine to form 4'-phosphopantotheine and this reaction forms part of the biosynthesis of coenzyme A. This is Phosphopantothenoylcysteine decarboxylase (Ppcdc) from Mus musculus (Mouse).